The primary structure comprises 860 residues: MNNPSTPKAPLADYLAHLPLAEEERARLGESASFSELHARLAGEGAASEAGGDPALASVRARLQLGSPELDDAEMFGVDAQGRTFLKISPPIRRTKVIPEPWRTNILVRGWRRLTGRSNPPKPKRALPRARWQRVGSLRRFILLLLMLAQTSVATYYMKGILPYQGWAFVDLEELTRQSLLDTVQQVLPYVIQFGILALFAILFCWVSAGFWTALMGFWELLTGRDRYRISGSSAGSEPIAADARTAIVMPICNEDVPRVFAGLRATVESMAATGEMERFDFFVLSDTNDPDIAVAEQQAWLELCRETRGFGKIFYRRRRRRVKRKSGNIDDFCRRWGGDYRYMVVMDADSVMSGDCLAKLVRLMEANPEAGIIQTAPKASGMDTLYARMQQFATRVYGPLFTAGLHFWQLGESHYWGHNAIIRMQPFIDHCALAPLPGKGSFAGAILSHDFVEAALMRRAGWGVWIAYDLDGSYEELPPNLLDELKRDRRWCHGNLMNFRLFLVKGMHPVHRAVFLTGVMSYLSAPLWFFFLVLSTALLAVHQLMEPQYFLEPRQLFPIWPQWHPEKAIALFSTTLTLLFLPKLLSVMLIWAKGAKGFGGVIRVTLSMLLEMFFSVLLAPVRMLFHTRFVLAAFLGWSVQWNSPQRDDDATPWSEAIRRHGMQTLLGLAWTLLVAWLNPRFLWWLSPIVGSLMLSIPVSVISSRVKLGLRARDEKLFLIPEEYDTPRELRATDEYTYENRWHALKDGFLKAAVDPLLNALACAMGTARHNRAQAIETVRGERIGKAIEKGPEQLDGATRLALLSDPVALSRLHAQVWEENRDDWLGRWRKAEADDPHAASVPLAQVVPGDAGLLPAAQS.

Helical transmembrane passes span 141 to 161 (FILL…MKGI), 187 to 207 (VLPY…FCWV), 515 to 535 (VFLT…FLVL), 572 to 592 (LFST…MLIW), 599 to 619 (FGGV…SVLL), and 682 to 702 (FLWW…VSVI).

This sequence belongs to the glycosyltransferase 2 family. OpgH subfamily.

Its subcellular location is the cell inner membrane. It participates in glycan metabolism; osmoregulated periplasmic glucan (OPG) biosynthesis. Functionally, involved in the biosynthesis of osmoregulated periplasmic glucans (OPGs). The polypeptide is Glucans biosynthesis glucosyltransferase H (Pseudomonas paraeruginosa (strain DSM 24068 / PA7) (Pseudomonas aeruginosa (strain PA7))).